The chain runs to 318 residues: tRNA dimethylallyltransferase (318 aa).

An ATP-binding site is contributed by 28-35 (GPTGAGKS). Residue 30 to 35 (TGAGKS) coordinates substrate. Residues 53-56 (DSMQ) are interaction with substrate tRNA.

Belongs to the IPP transferase family. In terms of assembly, monomer. Mg(2+) serves as cofactor.

It carries out the reaction adenosine(37) in tRNA + dimethylallyl diphosphate = N(6)-dimethylallyladenosine(37) in tRNA + diphosphate. In terms of biological role, catalyzes the transfer of a dimethylallyl group onto the adenine at position 37 in tRNAs that read codons beginning with uridine, leading to the formation of N6-(dimethylallyl)adenosine (i(6)A). The chain is tRNA dimethylallyltransferase from Parafrankia sp. (strain EAN1pec).